The following is a 289-amino-acid chain: Bis(5'-nucleosyl)-tetraphosphatase, symmetrical (289 aa).

It belongs to the Ap4A hydrolase family.

It catalyses the reaction P(1),P(4)-bis(5'-adenosyl) tetraphosphate + H2O = 2 ADP + 2 H(+). Its function is as follows. Hydrolyzes diadenosine 5',5'''-P1,P4-tetraphosphate to yield ADP. In Pseudomonas fluorescens (strain ATCC BAA-477 / NRRL B-23932 / Pf-5), this protein is Bis(5'-nucleosyl)-tetraphosphatase, symmetrical.